Reading from the N-terminus, the 205-residue chain is MSGTTESQLNQLVGAMHLRHRFLGVFDKTFPGFLDPNRPASAIVNTGSRATGGMHWIAFAFDPIARKCYMFDPFGWSDRELWNLYKVKYDAFLRRTGLRQPDKCFELVRSVEAVQCPCSAACGLFSALFIASFDRYHTRPMDGNPIIDTVVGVKHSDMYKPEFQSILHRNQERMYFWFMKNNSFFRAHESELKRETAINSVPENH.

Active-site residues include His55, Asp72, and Cys122.

The protein belongs to the peptidase C5 family. As to quaternary structure, interacts with protease cofactor pVI-C; this interaction is necessary for protease activation.

It is found in the virion. Its subcellular location is the host nucleus. The enzyme catalyses Cleaves proteins of the adenovirus and its host cell at two consensus sites: -Yaa-Xaa-Gly-Gly-|-Xaa- and -Yaa-Xaa-Gly-Xaa-|-Gly- (in which Yaa is Met, Ile or Leu, and Xaa is any amino acid).. Its activity is regulated as follows. Requires DNA and protease cofactor for maximal activation. Inside nascent virions, becomes partially activated by binding to the viral DNA, allowing it to cleave the cofactor that binds to the protease and fully activates it. Actin, like the viral protease cofactor, seems to act as a cofactor in the cleavage of cytokeratin 18 and of actin itself. Cleaves viral precursor proteins (pTP, pIIIa, pVI, pVII, pVIII, and pX) inside newly assembled particles giving rise to mature virions. Protease complexed to its cofactor slides along the viral DNA to specifically locate and cleave the viral precursors. Mature virions have a weakened organization compared to the unmature virions, thereby facilitating subsequent uncoating. Without maturation, the particle lacks infectivity and is unable to uncoat. Late in adenovirus infection, in the cytoplasm, may participate in the cytoskeleton destruction. Cleaves host cell cytoskeletal keratins K7 and K18. This chain is Protease, found in Galliformes (FAdV-8).